We begin with the raw amino-acid sequence, 360 residues long: Photosystem II protein D1 1 (360 aa).

The next 3 membrane-spanning stretches (helical) occupy residues 29 to 46 (YVGWFGVLLIPTALTAAI), 118 to 133 (HFLIAIYAYMGRQWEL), and 142 to 156 (WIPVAFSAPVAAATA). His-118 lines the chlorophyll a pocket. A pheophytin a-binding site is contributed by Tyr-126. [CaMn4O5] cluster is bound by residues Asp-170 and Glu-189. Residues 197–218 (FHMIGVAGVFGGALFSAMHGSL) traverse the membrane as a helical segment. His-198 contributes to the chlorophyll a binding site. A quinone is bound by residues His-215 and 264–265 (SF). Residue His-215 coordinates Fe cation. His-272 serves as a coordination point for Fe cation. Residues 274-288 (FLAAWPVIGIWFAAL) traverse the membrane as a helical segment. Residues His-332, Glu-333, Asp-342, and Ala-344 each contribute to the [CaMn4O5] cluster site. Positions 345-360 (SGEVQPIALAAPAIAS) are excised as a propeptide.

The protein belongs to the reaction center PufL/M/PsbA/D family. As to quaternary structure, PSII is composed of 1 copy each of membrane proteins PsbA, PsbB, PsbC, PsbD, PsbE, PsbF, PsbH, PsbI, PsbJ, PsbK, PsbL, PsbM, PsbT, PsbX, PsbY, PsbZ, Psb30/Ycf12, peripheral proteins PsbO, CyanoQ (PsbQ), PsbU, PsbV and a large number of cofactors. It forms dimeric complexes. Requires The D1/D2 heterodimer binds P680, chlorophylls that are the primary electron donor of PSII, and subsequent electron acceptors. It shares a non-heme iron and each subunit binds pheophytin, quinone, additional chlorophylls, carotenoids and lipids. D1 provides most of the ligands for the Mn4-Ca-O5 cluster of the oxygen-evolving complex (OEC). There is also a Cl(-1) ion associated with D1 and D2, which is required for oxygen evolution. The PSII complex binds additional chlorophylls, carotenoids and specific lipids. as cofactor. In terms of processing, tyr-161 forms a radical intermediate that is referred to as redox-active TyrZ, YZ or Y-Z. Post-translationally, C-terminally processed by CtpA; processing is essential to allow assembly of the oxygen-evolving complex and thus photosynthetic growth.

Its subcellular location is the cellular thylakoid membrane. It carries out the reaction 2 a plastoquinone + 4 hnu + 2 H2O = 2 a plastoquinol + O2. Functionally, photosystem II (PSII) is a light-driven water:plastoquinone oxidoreductase that uses light energy to abstract electrons from H(2)O, generating O(2) and a proton gradient subsequently used for ATP formation. It consists of a core antenna complex that captures photons, and an electron transfer chain that converts photonic excitation into a charge separation. The D1/D2 (PsbA/PsbD) reaction center heterodimer binds P680, the primary electron donor of PSII as well as several subsequent electron acceptors. The chain is Photosystem II protein D1 1 from Trichormus variabilis (strain ATCC 29413 / PCC 7937) (Anabaena variabilis).